The sequence spans 103 residues: Small ribosomal subunit protein uS10 (103 aa).

Belongs to the universal ribosomal protein uS10 family. As to quaternary structure, part of the 30S ribosomal subunit.

Its function is as follows. Involved in the binding of tRNA to the ribosomes. The chain is Small ribosomal subunit protein uS10 from Campylobacter lari (strain RM2100 / D67 / ATCC BAA-1060).